The sequence spans 815 residues: MKSNQERSNECLPPKKREIPATSRSSEEKAPTLPSDNHRVEGTAWLPGNPGGRGHGGGRHGPAGTSVELGLQQGIGLHKALSTGLDYSPPSAPRSVPVATTLPAAYATPQPGTPVSPVQYAHLPHTFQFIGSSQYSGTYASFIPSQLIPPTANPVTSAVASAAGATTPSQRSQLEAYSTLLANMGSLSQTPGHKAEQQQQQQQQQQQQHQHQQQQQQQQQQQQQQHLSRAPGLITPGSPPPAQQNQYVHISSSPQNTGRTASPPAIPVHLHPHQTMIPHTLTLGPPSQVVMQYADSGSHFVPREATKKAESSRLQQAIQAKEVLNGEMEKSRRYGAPSSADLGLGKAGGKSVPHPYESRHVVVHPSPSDYSSRDPSGVRASVMVLPNSNTPAADLEVQQATHREASPSTLNDKSGLHLGKPGHRSYALSPHTVIQTTHSASEPLPVGLPATAFYAGTQPPVIGYLSGQQQAITYAGSLPQHLVIPGTQPLLIPVGSTDMEASGAAPAIVTSSPQFAAVPHTFVTTALPKSENFNPEALVTQAAYPAMVQAQIHLPVVQSVASPAAAPPTLPPYFMKGSIIQLANGELKKVEDLKTEDFIQSAEISNDLKIDSSTVERIEDSHSPGVAVIQFAVGEHRAQVSVEVLVEYPFFVFGQGWSSCCPERTSQLFDLPCSKLSVGDVCISLTLKNLKNGSVKKGQPVDPASVLLKHSKADGLAGSRHRYAEQENGINQGSAQMLSENGELKFPEKMGLPAAPFLTKIEPSKPAATRKRRWSAPESRKLEKSEDEPPLTLPKPSLIPQEVKICIEGRSNVGK.

The span at 1–41 (MKSNQERSNECLPPKKREIPATSRSSEEKAPTLPSDNHRVE) shows a compositional bias: basic and acidic residues. Positions 1 to 63 (MKSNQERSNE…GHGGGRHGPA (63 aa)) are disordered. A Glycyl lysine isopeptide (Lys-Gly) (interchain with G-Cter in SUMO) cross-link involves residue lysine 16. The span at 49-61 (NPGGRGHGGGRHG) shows a compositional bias: gly residues. Phosphoserine occurs at positions 82 and 88. Disordered stretches follow at residues 185 to 270 (GSLS…PVHL), 329 to 355 (EKSRRYGAPSSADLGLGKAGGKSVPHP), and 397 to 424 (VQQATHREASPSTLNDKSGLHLGKPGHR). Residue lysine 194 forms a Glycyl lysine isopeptide (Lys-Gly) (interchain with G-Cter in SUMO) linkage. Positions 197–226 (QQQQQQQQQQQQHQHQQQQQQQQQQQQQQH) are enriched in low complexity. Phosphoserine occurs at positions 238 and 253. Over residues 243-260 (QQNQYVHISSSPQNTGRT) the composition is skewed to polar residues. The self-association stretch occupies residues 494–604 (VGSTDMEASG…TEDFIQSAEI (111 aa)). The interval 538 to 815 (LVTQAAYPAM…CIEGRSNVGK (278 aa)) is interaction with USP7. An RNA-binding region spans residues 540-766 (TQAAYPAMVQ…FLTKIEPSKP (227 aa)). Residues 562-693 (SPAAAPPTLP…SLTLKNLKNG (132 aa)) form the AXH domain. Glycyl lysine isopeptide (Lys-Gly) (interchain with G-Cter in SUMO) cross-links involve residues lysine 609, lysine 696, and lysine 745. Positions 762–798 (EPSKPAATRKRRWSAPESRKLEKSEDEPPLTLPKPSL) are disordered. Position 775 is a phosphoserine (serine 775). The Nuclear localization signal motif lies at 794–797 (PKPS).

The protein belongs to the ATXN1 family. As to quaternary structure, homooligomer. Interacts with CIC. Interacts with ANP32A, PQBP1, UBQLN4, ATXN1L and USP7. Directly interacts with RBPJ; this interaction is disrupted in the presence of Notch intracellular domain. Competes with ATXN1L for RBPJ-binding. Found in a complex with CIC and ATXN1L. Post-translationally, ubiquitinated by UBE3A, leading to its degradation by the proteasome. The presence of expanded poly-Gln repeats in spinocerebellar ataxia 1 (SCA1) patients impairs ubiquitination and degradation, leading to accumulation of ATXN1 in neurons and subsequent toxicity. Phosphorylation at Ser-775 increases the pathogenicity of proteins with an expanded polyglutamine tract. In terms of processing, sumoylation is dependent on nuclear localization and phosphorylation at Ser-775. It is reduced in the presence of an expanded polyglutamine tract. As to expression, widely expressed throughout the body.

Its subcellular location is the cytoplasm. It is found in the nucleus. In terms of biological role, chromatin-binding factor that repress Notch signaling in the absence of Notch intracellular domain by acting as a CBF1 corepressor. Binds to the HEY promoter and might assist, along with NCOR2, RBPJ-mediated repression. Binds RNA in vitro. May be involved in RNA metabolism. In concert with CIC and ATXN1L, involved in brain development. The protein is Ataxin-1 (ATXN1) of Homo sapiens (Human).